Here is a 265-residue protein sequence, read N- to C-terminus: Mlc titration factor A (265 aa).

Positions 111, 148, 152, and 211 each coordinate Zn(2+).

The protein belongs to the MtfA family. As to quaternary structure, interacts with Mlc. Zn(2+) serves as cofactor.

The protein localises to the cytoplasm. Functionally, involved in the modulation of the activity of the glucose-phosphotransferase system (glucose-PTS). Interacts with the transcriptional repressor Mlc, preventing its interaction with DNA and leading to the modulation of expression of genes regulated by Mlc, including ptsG, which encodes the PTS system glucose-specific EIICB component. In terms of biological role, shows zinc-dependent metallopeptidase activity. This chain is Mlc titration factor A, found in Escherichia coli O6:K15:H31 (strain 536 / UPEC).